Consider the following 240-residue polypeptide: RING finger protein 151 (240 aa).

An RING-type zinc finger spans residues 20-58; it reads CSVCHGVLKRPVRLPCSHIFCKKCILRWLARQKTCPCCR. The TRAF-type zinc-finger motif lies at 101–156; that stretch reads GHQDSCPFELMVCPNEGCMLRVPRGALDEHRQNCQHGAYHRCSLGCGATLGPVERA.

This is RING finger protein 151 (RNF151) from Bos taurus (Bovine).